The following is a 780-amino-acid chain: MKKRFPTLLATLIWTALYSQHTLADLAEQCMLGVPTYDQPLVTGDPNQLPVRINADKTEANYPDNALFTGNVIVQQGNSTLTANQVELTQVQKPGEVIPLRTVTATGDVNYDDPQIKLKGPKGWSNLNTKDTDMDKGKYQMVGRQGRGDADLMKLRDQSRYTILKNGTFTSCLPGDNSWSVVGSEVIHDREEQVVEVWNARFKIGKVPVFYSPYMQLPVGDKRRSGFLIPNAKFTSNNGFEFLLPYYWNIAPNFDATITPHYMERRGLQWQNEFRYLLAPGSGTMALDWLPNDRIYTGPDGTDKNATRWLYYWGHSGVMDQVWRFNINYTRVSDPAYFTDLTSQYGSTTDGYATQIFTAGYANENWNATLSSKQFQVFTAAGNSNAYRAQPQLDMNYYKNDVGPFDMHVYGQAAKFTSVNPTNPEASRFHIEPTVNLPLSNSWGSINTEAKLLATHYQQDIPASFADNASNPKLKDSVNRVLPQFKVDGKVVFDRSMDWATGFTQTLEPRAQYLYVPYRNQDDIYIYDTTLMQSDYSGLFRDRTYSGLDRIASANQVSTGLTSRIYDDARVERFNVSVGQIYYFSRSRTGNTEAIDNSNATGSLVWAGDTFWRINDQLGLKGGAQYDTRLGSLTLGNAIMEYRKDADRMIQLNYRYASPKYIQAAVPKVYNPDYQQGISQVGTTASWPIADRWAIVGAYYYDTKAKQPASQLVGLQYNTCCWAVNLGYERKITGWNAQGQTSKYDNKIGFNIELRGLSGGHSLGTAQMLNSGILPYQSAF.

An N-terminal signal peptide occupies residues 1–24 (MKKRFPTLLATLIWTALYSQHTLA).

It belongs to the LptD family. Component of the lipopolysaccharide transport and assembly complex. Interacts with LptE and LptA.

The protein localises to the cell outer membrane. Its function is as follows. Together with LptE, is involved in the assembly of lipopolysaccharide (LPS) at the surface of the outer membrane. The sequence is that of LPS-assembly protein LptD from Yersinia pestis bv. Antiqua (strain Antiqua).